The following is a 262-amino-acid chain: Acyl-coenzyme A diphosphatase FITM2 (262 aa).

Over 1-23 (MEHLERCAWFLRGTLVRATVRRH) the chain is Cytoplasmic. The helical transmembrane segment at 24–44 (LPWALVAAMLAGSVVKELSPL) threads the bilayer. Over 45 to 57 (PESYLSNKRNVLN) the chain is Lumenal. Residues 58 to 78 (VYFVKLAWAWTVCLLLPFIAL) traverse the membrane as a helical segment. Residues 79-93 (TNYHLTGKTSLVLRR) lie on the Cytoplasmic side of the membrane. The chain crosses the membrane as a helical span at residues 94-114 (LSTLLVGTAIWYICTALFSNI). At 115 to 145 (EHYTGSCYQSPALEGIRQEHRSKQQCHREGG) the chain is on the lumenal side. Residues 146-166 (FWHGFDISGHSFLLTFCALMI) traverse the membrane as a helical segment. Histidine 155 is an active-site residue. Residues 167 to 190 (VEEMAVLHEVKTDRGHHLHAAITT) are Cytoplasmic-facing. Residues 191-211 (LVVALGFLTFIWVWMFLCTAV) traverse the membrane as a helical segment. Over 212 to 218 (YFHDLTQ) the chain is Lumenal. The active site involves histidine 214. The helical transmembrane segment at 219 to 239 (KVFGTMFGLLGWYGTYGYWYL) threads the bilayer. At 240 to 262 (KSFSPGLPPQSCSLTLKRDTYKK) the chain is on the cytoplasmic side.

Belongs to the FIT family. Widely expressed, with highest levels in white and brown adipose tissues (at protein level). In the heart, mRNA expression levels do not correlate well with protein levels, suggesting post-transcriptional regulation in this organ.

The protein localises to the endoplasmic reticulum membrane. It catalyses the reaction an acyl-CoA + H2O = an acyl-4'-phosphopantetheine + adenosine 3',5'-bisphosphate + 2 H(+). It carries out the reaction (9Z)-octadecenoyl-CoA + H2O = S-(9Z-octadecenoyl)-4'-phosphopantetheine + adenosine 3',5'-bisphosphate + 2 H(+). The enzyme catalyses (5Z,8Z,11Z,14Z)-eicosatetraenoyl-CoA + H2O = S-(5Z,8Z,11Z,14Z-eicosatetraenoyl)-4'-phosphopantetheine + adenosine 3',5'-bisphosphate + 2 H(+). The catalysed reaction is hexadecanoyl-CoA + H2O = S-hexadecanoyl-4'-phosphopantetheine + adenosine 3',5'-bisphosphate + 2 H(+). Fatty acyl-coenzyme A (CoA) diphosphatase that hydrolyzes fatty acyl-CoA to yield acyl-4'-phosphopantetheine and adenosine 3',5'-bisphosphate. Preferentially hydrolyzes unsaturated long-chain acyl-CoA substrates such as oleoyl-CoA/(9Z)-octadecenoyl-CoA and arachidonoyl-CoA/(5Z,8Z,11Z,14Z)-eicosatetraenoyl-CoA in the endoplasmic reticulum (ER) lumen. This catalytic activity is required for maintaining ER structure and for lipid droplets (LDs) biogenesis, which are lipid storage organelles involved in maintaining lipid and energy homeostasis. Directly binds to diacylglycerol (DAGs) and triacylglycerol, which is also important for LD biogenesis. May support directional budding of nacent LDs from the ER into the cytosol by reducing DAG levels at sites of LD formation. Plays a role in the regulation of cell morphology and cytoskeletal organization. The chain is Acyl-coenzyme A diphosphatase FITM2 from Mus musculus (Mouse).